Reading from the N-terminus, the 400-residue chain is uncharacterized protein (400 aa).

Residues 161-380 enclose the TR mART core domain; sequence NDLLNIIDIV…YVVKVIVMRL (220 aa).

This is an uncharacterized protein from Acanthamoeba polyphaga (Amoeba).